We begin with the raw amino-acid sequence, 159 residues long: Large ribosomal subunit protein uL10 (159 aa).

The protein belongs to the universal ribosomal protein uL10 family. As to quaternary structure, part of the ribosomal stalk of the 50S ribosomal subunit. The N-terminus interacts with L11 and the large rRNA to form the base of the stalk. The C-terminus forms an elongated spine to which L12 dimers bind in a sequential fashion forming a multimeric L10(L12)X complex.

Functionally, forms part of the ribosomal stalk, playing a central role in the interaction of the ribosome with GTP-bound translation factors. The sequence is that of Large ribosomal subunit protein uL10 from Campylobacter jejuni subsp. jejuni serotype O:6 (strain 81116 / NCTC 11828).